The following is a 432-amino-acid chain: C-type cytochrome OmcS (432 aa).

Residues 1-25 (MKKGMKVSLSVAAAALLMSAPAAFA) form the signal peptide.

Heme is required as a cofactor.

It localises to the cell outer membrane. The protein resides in the cell surface. Its function is as follows. Plays an important role in extracellular electron transfer. Can transfer electrons to insoluble Fe(3+) oxides as well as other extracellular electron acceptors, including Mn(4+) oxide and humic substances. Essential for direct interspecies electron transfer (DIET) in cocultures with G.metallireducens. In Geobacter sulfurreducens (strain ATCC 51573 / DSM 12127 / PCA), this protein is C-type cytochrome OmcS.